The primary structure comprises 269 residues: Indole-3-glycerol phosphate synthase (269 aa).

This sequence belongs to the TrpC family.

It catalyses the reaction 1-(2-carboxyphenylamino)-1-deoxy-D-ribulose 5-phosphate + H(+) = (1S,2R)-1-C-(indol-3-yl)glycerol 3-phosphate + CO2 + H2O. It participates in amino-acid biosynthesis; L-tryptophan biosynthesis; L-tryptophan from chorismate: step 4/5. The chain is Indole-3-glycerol phosphate synthase from Rhodococcus opacus (strain B4).